A 141-amino-acid polypeptide reads, in one-letter code: Large ribosomal subunit protein bL17 (141 aa).

The protein belongs to the bacterial ribosomal protein bL17 family. In terms of assembly, part of the 50S ribosomal subunit. Contacts protein L32.

This is Large ribosomal subunit protein bL17 from Chlamydia trachomatis serovar D (strain ATCC VR-885 / DSM 19411 / UW-3/Cx).